Reading from the N-terminus, the 827-residue chain is Villin-1 (827 aa).

Residues 1 to 126 (MTKLNAQVKG…IRKGGVASGM (126 aa)) are necessary for homodimerization. A core region spans residues 1 to 734 (MTKLNAQVKG…YDDLKAELGN (734 aa)). The Gelsolin-like 1 repeat unit spans residues 27-76 (MQMVPVPSSTFGSFFDGDCYVVLAIHKTSSTLSYDIHYWIGQDSSQDEQG). LPA/PIP2-binding site stretches follow at residues 112 to 119 (KQGLVIRK) and 138 to 146 (RLLHVKGKR). 2 Gelsolin-like repeats span residues 148–188 (VLAG…MERL) and 265–309 (LVVR…QERS). Residue serine 366 is modified to Phosphoserine. 3 Gelsolin-like repeats span residues 407 to 457 (DLEL…DEIA), 528 to 568 (TKAF…DERE), and 631 to 672 (FLAT…EEKK). Phosphoserine is present on residues serine 735 and serine 776. Residues 735-827 (SGDWSQIADE…QNIKKEKGLF (93 aa)) form a headpiece region. The 67-residue stretch at 761 to 827 (SGPLPTFPLE…QNIKKEKGLF (67 aa)) folds into the HP domain. The segment at 816 to 824 (KQQNIKKEK) is LPA/PIP2-binding site 3.

Belongs to the villin/gelsolin family. In terms of assembly, monomer. Homodimer; homodimerization is necessary for actin-bundling. Associates with F-actin; phosphorylation at tyrosine residues decreases the association with F-actin. Interacts (phosphorylated at C-terminus tyrosine phosphorylation sites) with PLCG1 (via the SH2 domains). Interacts (phosphorylated form) with PLCG1; the interaction is enhanced by hepatocyte growth factor (HGF). Phosphorylated on tyrosine residues by SRC. The unphosphorylated form increases the initial rate of actin-nucleating activity, whereas the tyrosine phosphorylated form inhibits actin-nucleating activity, enhances actin-bundling activity and enhances actin-severing activity by reducing high Ca(2+) requirements. The tyrosine phosphorylated form does not regulate actin-capping activity. Tyrosine phosphorylation is essential for cell migration: tyrosine phosphorylation sites in the N-terminus half regulate actin reorganization and cell morphology, whereas tyrosine phosphorylation sites in the C-terminus half regulate cell migration via interaction with PLCG1. Tyrosine phosphorylation is induced by epidermal growth factor (EGF) and stimulates cell migration. In terms of tissue distribution, expressed in small intestin, colon, kidney and enterocytes (at protein level).

Its subcellular location is the cytoplasm. The protein localises to the cytoskeleton. The protein resides in the cell projection. It localises to the microvillus. It is found in the lamellipodium. Its subcellular location is the ruffle. The protein localises to the filopodium tip. The protein resides in the filopodium. Functionally, epithelial cell-specific Ca(2+)-regulated actin-modifying protein that modulates the reorganization of microvillar actin filaments. Plays a role in the actin nucleation, actin filament bundle assembly, actin filament capping and severing. Binds phosphatidylinositol 4,5-bisphosphate (PIP2) and lysophosphatidic acid (LPA); binds LPA with higher affinity than PIP2. Binding to LPA increases its phosphorylation by SRC and inhibits all actin-modifying activities. Binding to PIP2 inhibits actin-capping and -severing activities but enhances actin-bundling activity. Regulates the intestinal epithelial cell morphology, cell invasion, cell migration and apoptosis. Protects against apoptosis induced by dextran sodium sulfate (DSS) in the gastrointestinal epithelium. Appears to regulate cell death by maintaining mitochondrial integrity. Enhances hepatocyte growth factor (HGF)-induced epithelial cell motility, chemotaxis and wound repair. Upon S.flexneri cell infection, its actin-severing activity enhances actin-based motility of the bacteria and plays a role during the dissemination. This Mus musculus (Mouse) protein is Villin-1 (Vil1).